The sequence spans 331 residues: UBX domain-containing protein 2B (331 aa).

Basic and acidic residues-rich tracts occupy residues 1–16 (MAEGGRAEPEEQERGS) and 37–48 (DEMKCKSSKPDR). The segment at 1–70 (MAEGGRAEPE…PHRLYSGDHK (70 aa)) is disordered. Position 2 is an N-acetylalanine (A2). S56 carries the post-translational modification Phosphoserine. The residue at position 59 (T59) is a Phosphothreonine. At S66 the chain carries Phosphoserine. Residues 141–206 (DVQVLLKLWR…MEDHQDQEYI (66 aa)) enclose the SEP domain. S231, S234, and S235 each carry phosphoserine. A UBX domain is found at 252 to 329 (DSMPTTKIQI…DILNTVILQQ (78 aa)).

It belongs to the NSFL1C family. In terms of assembly, interacts with VCP. Does not bind ubiquitin.

Its subcellular location is the nucleus. The protein resides in the cytoplasm. It localises to the cytosol. It is found in the endoplasmic reticulum. The protein localises to the golgi apparatus. Its subcellular location is the cytoskeleton. The protein resides in the microtubule organizing center. It localises to the centrosome. Its function is as follows. Adapter protein required for Golgi and endoplasmic reticulum biogenesis. Involved in Golgi and endoplasmic reticulum maintenance during interphase and in their reassembly at the end of mitosis. The complex formed with VCP has membrane fusion activity; membrane fusion activity requires USO1-GOLGA2 tethering and BET1L. VCPIP1 is also required, but not its deubiquitinating activity. Together with NSFL1C/p47, regulates the centrosomal levels of kinase AURKA/Aurora A during mitotic progression by promoting AURKA removal from centrosomes in prophase. Also, regulates spindle orientation during mitosis. The chain is UBX domain-containing protein 2B (Ubxn2b) from Mus musculus (Mouse).